The sequence spans 436 residues: 3-ketoacyl-CoA thiolase (436 aa).

C99 functions as the Acyl-thioester intermediate in the catalytic mechanism. Residues H392 and C422 each act as proton acceptor in the active site.

The protein belongs to the thiolase-like superfamily. Thiolase family. In terms of assembly, heterotetramer of two alpha chains (FadJ) and two beta chains (FadI).

The protein resides in the cytoplasm. The catalysed reaction is an acyl-CoA + acetyl-CoA = a 3-oxoacyl-CoA + CoA. The protein operates within lipid metabolism; fatty acid beta-oxidation. Its function is as follows. Catalyzes the final step of fatty acid oxidation in which acetyl-CoA is released and the CoA ester of a fatty acid two carbons shorter is formed. This chain is 3-ketoacyl-CoA thiolase, found in Aeromonas salmonicida (strain A449).